Reading from the N-terminus, the 391-residue chain is 3-ketoacyl-CoA thiolase (391 aa).

The active-site Acyl-thioester intermediate is C95. Catalysis depends on proton acceptor residues H347 and C377.

The protein belongs to the thiolase-like superfamily. Thiolase family. In terms of assembly, heterotetramer of two alpha chains (FadB) and two beta chains (FadA).

It localises to the cytoplasm. It carries out the reaction an acyl-CoA + acetyl-CoA = a 3-oxoacyl-CoA + CoA. It participates in lipid metabolism; fatty acid beta-oxidation. Catalyzes the final step of fatty acid oxidation in which acetyl-CoA is released and the CoA ester of a fatty acid two carbons shorter is formed. This Hahella chejuensis (strain KCTC 2396) protein is 3-ketoacyl-CoA thiolase.